The primary structure comprises 71 residues: Large ribosomal subunit protein bL31 (71 aa).

4 residues coordinate Zn(2+): C16, C18, C36, and C39.

This sequence belongs to the bacterial ribosomal protein bL31 family. Type A subfamily. Part of the 50S ribosomal subunit. Requires Zn(2+) as cofactor.

Binds the 23S rRNA. The chain is Large ribosomal subunit protein bL31 from Pseudothermotoga lettingae (strain ATCC BAA-301 / DSM 14385 / NBRC 107922 / TMO) (Thermotoga lettingae).